Reading from the N-terminus, the 155-residue chain is uncharacterized protein (155 aa).

Residues K28–G38 are compositionally biased toward basic and acidic residues. Residues K28 to C52 form a disordered region.

This is an uncharacterized protein from Dryophytes versicolor (chameleon treefrog).